We begin with the raw amino-acid sequence, 186 residues long: Elongation factor P (186 aa).

This sequence belongs to the elongation factor P family.

The protein localises to the cytoplasm. It functions in the pathway protein biosynthesis; polypeptide chain elongation. In terms of biological role, involved in peptide bond synthesis. Stimulates efficient translation and peptide-bond synthesis on native or reconstituted 70S ribosomes in vitro. Probably functions indirectly by altering the affinity of the ribosome for aminoacyl-tRNA, thus increasing their reactivity as acceptors for peptidyl transferase. The protein is Elongation factor P of Brucella ovis (strain ATCC 25840 / 63/290 / NCTC 10512).